A 157-amino-acid chain; its full sequence is Peptide methionine sulfoxide reductase MsrA (157 aa).

Cys-13 is an active-site residue.

This sequence belongs to the MsrA Met sulfoxide reductase family.

It carries out the reaction L-methionyl-[protein] + [thioredoxin]-disulfide + H2O = L-methionyl-(S)-S-oxide-[protein] + [thioredoxin]-dithiol. The enzyme catalyses [thioredoxin]-disulfide + L-methionine + H2O = L-methionine (S)-S-oxide + [thioredoxin]-dithiol. In terms of biological role, has an important function as a repair enzyme for proteins that have been inactivated by oxidation. Catalyzes the reversible oxidation-reduction of methionine sulfoxide in proteins to methionine. The polypeptide is Peptide methionine sulfoxide reductase MsrA (Methanococcus maripaludis (strain C6 / ATCC BAA-1332)).